The sequence spans 496 residues: Probable CtpA-like serine protease (496 aa).

Residues 1–26 (MRKCFFMSHNPEEKQSNLDSNHKNES) form a disordered region. Basic and acidic residues predominate over residues 10–25 (NPEEKQSNLDSNHKNE). A helical membrane pass occupies residues 39-59 (FILLLLGVVIITAGITVAATI). The PDZ domain occupies 124–206 (TKSFNEDVSG…TTVKLTIKRG (83 aa)). Active-site charge relay system residues include Ser-329, Asp-340, and Lys-354.

It belongs to the peptidase S41A family.

It is found in the cell membrane. This Staphylococcus haemolyticus (strain JCSC1435) protein is Probable CtpA-like serine protease.